The chain runs to 119 residues: BLOC-1-related complex subunit 8 (119 aa).

S109 is subject to Phosphoserine.

It belongs to the BORCS8 family. Component of the BLOC-one-related complex (BORC) which is composed of BLOC1S1, BLOC1S2, BORCS5, BORCS6, BORCS7, BORCS8, KXD1 and SNAPIN.

Its subcellular location is the lysosome membrane. Its function is as follows. As part of the BLOC-one-related complex (BORC), it plays a role in the movement and localization of lysosomes at the cell periphery. Associated with the cytosolic face of lysosomes, BORC recruits ARL8B to the lysosomal membrane and couples lysosomes to microtubule plus-end-directed kinesin motors, driving lysosome movement toward the cell periphery. The sequence is that of BLOC-1-related complex subunit 8 from Homo sapiens (Human).